We begin with the raw amino-acid sequence, 381 residues long: Orotidine 5'-phosphate decarboxylase (381 aa).

Residues aspartate 42, 64-66, 99-108, tyrosine 333, and arginine 352 each bind substrate; these read KTH and DRKFGDIGHT. The active-site Proton donor is lysine 101. The disordered stretch occupies residues 311-333; it reads LPPEDEDQQTNGSVGGDGQGQQY.

Belongs to the OMP decarboxylase family.

The catalysed reaction is orotidine 5'-phosphate + H(+) = UMP + CO2. It functions in the pathway pyrimidine metabolism; UMP biosynthesis via de novo pathway; UMP from orotate: step 2/2. The protein is Orotidine 5'-phosphate decarboxylase (ura3) of Hypocrea jecorina (Trichoderma reesei).